Consider the following 748-residue polypeptide: Transducin-like enhancer protein 4 (748 aa).

Disordered stretches follow at residues M1–P20 and L157–A332. The q domain stretch occupies residues M1–Q112. A GP domain region spans residues H113–S179. A compositionally biased stretch (basic and acidic residues) spans P158–I177. A compositionally biased stretch (low complexity) spans K178 to R189. The interval S180–P249 is ccN domain. Phosphoserine occurs at positions 183, 187, 191, and 197. The span at G190 to D227 shows a compositional bias: basic and acidic residues. Position 212 is an N6-acetyllysine (K212). S220 is subject to Phosphoserine. S225 carries the phosphoserine; by CK2 modification. S240 carries the phosphoserine; by CDK1 modification. Phosphoserine occurs at positions 244 and 248. The segment covering S248–A264 has biased composition (basic and acidic residues). Residues R250–H427 are SP domain. K256 is modified (N6-acetyllysine). A compositionally biased stretch (low complexity) spans P265–S280. A Phosphoserine modification is found at S267. Over residues T292–P303 the composition is skewed to polar residues. T293 is subject to Phosphothreonine. Phosphoserine is present on residues S296 and S298. Phosphothreonine occurs at positions 300, 302, 309, and 315. S394 carries the phosphoserine modification. 7 WD repeats span residues N460 to P498, N506 to K545, S550 to Q589, G592 to Q631, D633 to L672, L674 to Q713, and K715 to Y748.

It belongs to the WD repeat Groucho/TLE family. Homooligomer and heterooligomer with other family members. Binds PAX5, LEF1, TCF7, TCF7L1 and TCF7L2. Interacts with ZNF703; TLE4 may mediate ZNF703 transcriptional repression. Interacts with SIX3 and SIX6. Interacts with PAX2. In terms of processing, phosphorylated. PAX5 binding increases phosphorylation. Post-translationally, ubiquitinated by XIAP/BIRC4.

The protein localises to the nucleus. Its function is as follows. Transcriptional corepressor that binds to a number of transcription factors. Inhibits the transcriptional activation mediated by PAX5, and by CTNNB1 and TCF family members in Wnt signaling. The effects of full-length TLE family members may be modulated by association with dominant-negative AES. Essential for the transcriptional repressor activity of SIX3 during retina and lens development and for SIX3 transcriptional auto-repression. Involved in transcriptional repression of GNRHR and enhances MSX1-mediated transcriptional repression of CGA/alpha-GSU. The protein is Transducin-like enhancer protein 4 (Tle4) of Rattus norvegicus (Rat).